A 76-amino-acid polypeptide reads, in one-letter code: Large ribosomal subunit protein eL20 (76 aa).

This sequence belongs to the eukaryotic ribosomal protein eL20 family. As to quaternary structure, part of the 50S ribosomal subunit. Binds 23S rRNA.

In Methanococcus vannielii (strain ATCC 35089 / DSM 1224 / JCM 13029 / OCM 148 / SB), this protein is Large ribosomal subunit protein eL20.